We begin with the raw amino-acid sequence, 483 residues long: Rhamnulokinase (483 aa).

11 to 15 (ASSGR) is a binding site for ATP. Residues Gly79 and 234–236 (HDT) each bind substrate. Residue Asp235 is the Proton acceptor of the active site. Residue Thr257 coordinates ATP. Asn294 contacts substrate. Gln302 is an ATP binding site. Residues Cys352 and Cys369 are joined by a disulfide bond. Residue Gly401 participates in ATP binding.

This sequence belongs to the rhamnulokinase family. The cofactor is Mg(2+).

It carries out the reaction L-rhamnulose + ATP = L-rhamnulose 1-phosphate + ADP + H(+). It participates in carbohydrate degradation; L-rhamnose degradation; glycerone phosphate from L-rhamnose: step 2/3. In terms of biological role, involved in the catabolism of L-rhamnose (6-deoxy-L-mannose). Catalyzes the transfer of the gamma-phosphate group from ATP to the 1-hydroxyl group of L-rhamnulose to yield L-rhamnulose 1-phosphate. The chain is Rhamnulokinase from Listeria monocytogenes serotype 4b (strain CLIP80459).